Reading from the N-terminus, the 285-residue chain is Small ribosomal subunit biogenesis GTPase RsgA (285 aa).

The region spanning 56–217 (DNLLIRPIVA…IIDTPGFSSI (162 aa)) is the CP-type G domain. GTP is bound by residues 105-108 (NKID) and 159-167 (GPSGVGKSS). Zn(2+) is bound by residues Cys-241, Cys-246, His-248, and Cys-254.

It belongs to the TRAFAC class YlqF/YawG GTPase family. RsgA subfamily. Monomer. Associates with 30S ribosomal subunit, binds 16S rRNA. It depends on Zn(2+) as a cofactor.

The protein localises to the cytoplasm. Its function is as follows. One of several proteins that assist in the late maturation steps of the functional core of the 30S ribosomal subunit. Helps release RbfA from mature subunits. May play a role in the assembly of ribosomal proteins into the subunit. Circularly permuted GTPase that catalyzes slow GTP hydrolysis, GTPase activity is stimulated by the 30S ribosomal subunit. This chain is Small ribosomal subunit biogenesis GTPase RsgA, found in Fusobacterium nucleatum subsp. nucleatum (strain ATCC 25586 / DSM 15643 / BCRC 10681 / CIP 101130 / JCM 8532 / KCTC 2640 / LMG 13131 / VPI 4355).